Consider the following 239-residue polypeptide: DNA repair protein RecO (239 aa).

The protein belongs to the RecO family.

In terms of biological role, involved in DNA repair and RecF pathway recombination. This is DNA repair protein RecO from Cereibacter sphaeroides (strain ATCC 17029 / ATH 2.4.9) (Rhodobacter sphaeroides).